The following is a 310-amino-acid chain: MGFRHKDIIALKDLTKEEITLLLDTADSLSEINQRDIKKVPTLRGKTVINLFYEASTRTRTSFEIAAKRLSADAVNITASTSSVVKGETLSDTANNLLAMKPDIIVMRHAVSGAHEYLAKRVSCSVINAGDGAHEHPSQGLLDMLTMRQKFGKLDGLKVAIIGDITHSRVARSDIYGLTTMGSHVFLAGPPTMMPVGIERLGNVTVCKDMREAVDKADVVMMLRIQLERQGKTLLPSMREYSRYFGLNPEVLGLAKKNAIVMHPGPINRGVELASSVADCDQSAILTQVENGVAVRMAMLYHVCGGEPVE.

Arg58 and Thr59 together coordinate carbamoyl phosphate. Residue Lys86 coordinates L-aspartate. Carbamoyl phosphate-binding residues include Arg108, His136, and Gln139. 2 residues coordinate L-aspartate: Arg169 and Arg224. Positions 265 and 266 each coordinate carbamoyl phosphate.

This sequence belongs to the aspartate/ornithine carbamoyltransferase superfamily. ATCase family. As to quaternary structure, heterododecamer (2C3:3R2) of six catalytic PyrB chains organized as two trimers (C3), and six regulatory PyrI chains organized as three dimers (R2).

The enzyme catalyses carbamoyl phosphate + L-aspartate = N-carbamoyl-L-aspartate + phosphate + H(+). It participates in pyrimidine metabolism; UMP biosynthesis via de novo pathway; (S)-dihydroorotate from bicarbonate: step 2/3. Functionally, catalyzes the condensation of carbamoyl phosphate and aspartate to form carbamoyl aspartate and inorganic phosphate, the committed step in the de novo pyrimidine nucleotide biosynthesis pathway. The protein is Aspartate carbamoyltransferase catalytic subunit of Citrifermentans bemidjiense (strain ATCC BAA-1014 / DSM 16622 / JCM 12645 / Bem) (Geobacter bemidjiensis).